We begin with the raw amino-acid sequence, 252 residues long: Triosephosphate isomerase (252 aa).

10–12 (NWK) is a substrate binding site. Residue His96 is the Electrophile of the active site. Glu168 (proton acceptor) is an active-site residue. Substrate is bound by residues Gly174, Ser214, and 235–236 (GG).

The protein belongs to the triosephosphate isomerase family. In terms of assembly, homodimer.

The protein resides in the cytoplasm. The enzyme catalyses D-glyceraldehyde 3-phosphate = dihydroxyacetone phosphate. Its pathway is carbohydrate biosynthesis; gluconeogenesis. It participates in carbohydrate degradation; glycolysis; D-glyceraldehyde 3-phosphate from glycerone phosphate: step 1/1. In terms of biological role, involved in the gluconeogenesis. Catalyzes stereospecifically the conversion of dihydroxyacetone phosphate (DHAP) to D-glyceraldehyde-3-phosphate (G3P). The sequence is that of Triosephosphate isomerase from Streptococcus thermophilus (strain CNRZ 1066).